The chain runs to 101 residues: Small ribosomal subunit protein uS17 (101 aa).

This sequence belongs to the universal ribosomal protein uS17 family. Part of the 30S ribosomal subunit.

In terms of biological role, one of the primary rRNA binding proteins, it binds specifically to the 5'-end of 16S ribosomal RNA. The polypeptide is Small ribosomal subunit protein uS17 (Koribacter versatilis (strain Ellin345)).